A 281-amino-acid chain; its full sequence is Pantothenate synthetase (281 aa).

17–24 contacts ATP; that stretch reads MGFLHEGH. Histidine 24 serves as the catalytic Proton donor. Glutamine 48 contributes to the (R)-pantoate binding site. Glutamine 48 is a binding site for beta-alanine. 134–137 is an ATP binding site; it reads GEKD. Glutamine 140 serves as a coordination point for (R)-pantoate. Residues valine 163 and 176–179 each bind ATP; that span reads LSSR.

This sequence belongs to the pantothenate synthetase family. Homodimer.

The protein localises to the cytoplasm. It catalyses the reaction (R)-pantoate + beta-alanine + ATP = (R)-pantothenate + AMP + diphosphate + H(+). It functions in the pathway cofactor biosynthesis; (R)-pantothenate biosynthesis; (R)-pantothenate from (R)-pantoate and beta-alanine: step 1/1. Functionally, catalyzes the condensation of pantoate with beta-alanine in an ATP-dependent reaction via a pantoyl-adenylate intermediate. The chain is Pantothenate synthetase from Deinococcus radiodurans (strain ATCC 13939 / DSM 20539 / JCM 16871 / CCUG 27074 / LMG 4051 / NBRC 15346 / NCIMB 9279 / VKM B-1422 / R1).